Consider the following 245-residue polypeptide: DNA polymerase sliding clamp (245 aa).

The protein belongs to the PCNA family. In terms of assembly, homotrimer. The subunits circularize to form a toroid; DNA passes through its center. Replication factor C (RFC) is required to load the toroid on the DNA.

Functionally, sliding clamp subunit that acts as a moving platform for DNA processing. Responsible for tethering the catalytic subunit of DNA polymerase and other proteins to DNA during high-speed replication. This Methanosarcina barkeri (strain Fusaro / DSM 804) protein is DNA polymerase sliding clamp.